A 555-amino-acid chain; its full sequence is Vetispiradiene synthase 1 (555 aa).

Mg(2+) contacts are provided by Asp-308, Asp-312, Asp-451, Thr-455, and Glu-459. The short motif at 308-312 (DDTFD) is the DDXXD motif element.

Belongs to the terpene synthase family. Tpsa subfamily. The cofactor is Mg(2+).

It localises to the cytoplasm. The enzyme catalyses (2E,6E)-farnesyl diphosphate = (-)-vetispiradiene + diphosphate. Its pathway is secondary metabolite biosynthesis; terpenoid biosynthesis. In terms of biological role, sesquiterpene synthase that catalyzes the formation of vetispiradiene from trans,trans-farnesyl diphosphate. The initial internal cyclization produces the monocyclic intermediate germacrene A. In Hyoscyamus muticus (Egyptian henbane), this protein is Vetispiradiene synthase 1.